The following is a 127-amino-acid chain: Secreted RxLR effector protein 3 (127 aa).

The first 20 residues, Met-1 to Ala-20, serve as a signal peptide directing secretion. Positions Arg-30 to Arg-48 match the RxLR-dEER motif.

The protein belongs to the RxLR effector family.

It is found in the secreted. Its subcellular location is the host cell. Functionally, secreted effector that partially suppresses elicitor-induced cell death in host and enhances virulence of P.parasitica. This Phytophthora nicotianae (Potato buckeye rot agent) protein is Secreted RxLR effector protein 3.